Here is a 215-residue protein sequence, read N- to C-terminus: UPF0502 protein YceH (215 aa).

Position 80 is an N6-acetyllysine (Lys-80).

This sequence belongs to the UPF0502 family.

The chain is UPF0502 protein YceH from Escherichia coli O157:H7.